We begin with the raw amino-acid sequence, 143 residues long: Transcriptional regulator MraZ (143 aa).

SpoVT-AbrB domains are found at residues 5 to 47 (QYEH…SLDE) and 76 to 119 (AVEC…SKEV).

This sequence belongs to the MraZ family. In terms of assembly, forms oligomers.

It localises to the cytoplasm. Its subcellular location is the nucleoid. The protein is Transcriptional regulator MraZ of Caldanaerobacter subterraneus subsp. tengcongensis (strain DSM 15242 / JCM 11007 / NBRC 100824 / MB4) (Thermoanaerobacter tengcongensis).